Reading from the N-terminus, the 521-residue chain is Insulinoma-associated protein 1 (521 aa).

The span at 1–12 (MPRGFLVKRSKK) shows a compositional bias: basic residues. Residues 1-20 (MPRGFLVKRSKKSTPVSYRV) are SNAG domain. Disordered stretches follow at residues 1–59 (MPRG…PPAL), 76–107 (GPPP…PTRP), and 180–230 (AEAA…KPKA). The interval 2-7 (PRGFLV) is required and sufficient for interaction with KDM1A. Positions 43–56 (PPVPSPGPLPPPPP) are necessary for interaction with CCND1. 2 stretches are compositionally biased toward pro residues: residues 43–58 (PPVP…PPPA) and 76–85 (GPPPPPPPGP). Residues 209 to 223 (AAVATEPPAKAAKAP) show a composition bias toward low complexity. The C2H2-type 1; atypical zinc-finger motif lies at 272-292 (FICQLCKEEYADPFALAQHKC). The C2H2-type 2 zinc-finger motif lies at 300–322 (YRCPECAKVFSCPANLASHRRWH). The tract at residues 320–369 (RWHKPRPVPAAARAPEPEAATRAEAREAAGGGSSDRDTPSPGGVSESGSE) is disordered. A compositionally biased stretch (basic and acidic residues) spans 334–346 (PEPEAATRAEARE). Residues 373–395 (YECHHCAKKFRRQAYLRKHLLAH) form a C2H2-type 3 zinc finger. The interval 398-419 (ALQAKGAPPPPPPPPPPAEDIL) is disordered. Residues 404 to 415 (APPPPPPPPPPA) show a composition bias toward pro residues. C2H2-type zinc fingers lie at residues 452-475 (HLCP…RLLH) and 480-503 (FPCK…NKCH).

The protein belongs to the INSM1 family. As to quaternary structure, interacts (via the N-terminal region) with CCND1 (via cyclin N-terminal domain); the interaction competes with the binding of CCND1 to CDK4 during cell cycle progression and increases its transcriptional repressor activity. Interacts with HDAC3; the interaction increases its transcriptional repressor activity. Interacts (via the SNAG domain) with HDAC1. Interacts (via the SNAG domain) with HDAC2. Interacts (via the SNAG domain) with KDM1A. Interacts (via the SNAG domain) with RCOR1. Interacts with SORBS1. Expressed in adrenal gland. Expressed in the dentate gyrus of the hippocampus and the wall of the lateral ventricle. Expressed in pancreatic and intestinal endocrine cells.

It localises to the nucleus. Functionally, sequence-specific DNA-binding transcriptional regulator that plays a key role in neurogenesis and neuroendocrine cell differentiation during embryonic and/or fetal development. Binds to the consensus sequence 5'-[TG][TC][TC][TT][GA]GGG[CG]A-3' in target promoters. Acts as a transcriptional repressor of NEUROD1 and INS expression via its interaction with cyclin CCND1 in a cell cycle-independent manner. Negatively regulates skeletal muscle-specific gene expression in endocrine cells of the pituitary by inhibiting the Notch signaling pathway. Represses target gene transcription by recruiting chromatin-modifying factors, such as HDAC1, HDAC2, HDAC3, KDM1A and RCOR1 histone deacetylases. Binds to its own promoter, suggesting autoregulation as a self-control feedback mechanism. Competes with histone H3 for the same binding site on the histone demethylase complex formed by KDM1A and RCOR1, and thereby inhibits demethylation of histone H3 at 'Lys-4'. Promotes the generation and expansion of neuronal basal progenitor cells in the developing neocortex. Involved in the differentiation of endocrine cells of the developing anterior pituitary gland, of the pancreas and intestine, and of sympatho-adrenal cells in the peripheral nervous system. Promotes cell cycle signaling arrest and inhibition of cellular proliferation. The protein is Insulinoma-associated protein 1 (Insm1) of Mus musculus (Mouse).